A 65-amino-acid chain; its full sequence is Large ribosomal subunit protein bL35 (65 aa).

Basic residues predominate over residues 1-15 (MPKMKTKKSASKRFT). Disordered stretches follow at residues 1 to 26 (MPKM…KRGQ) and 38 to 65 (TKNK…MPYA). Basic and acidic residues predominate over residues 45 to 54 (RGTEGVHETN).

The protein belongs to the bacterial ribosomal protein bL35 family.

This is Large ribosomal subunit protein bL35 from Ralstonia pickettii (strain 12J).